Consider the following 131-residue polypeptide: Large ribosomal subunit protein bL12 (131 aa).

Over residues 100-125 (STPKPIKEGISKEDAEAAKKQLEDAG) the composition is skewed to basic and acidic residues. The disordered stretch occupies residues 100-131 (STPKPIKEGISKEDAEAAKKQLEDAGGKVSIK).

It belongs to the bacterial ribosomal protein bL12 family. Homodimer. Part of the ribosomal stalk of the 50S ribosomal subunit. Forms a multimeric L10(L12)X complex, where L10 forms an elongated spine to which 2 to 4 L12 dimers bind in a sequential fashion. Binds GTP-bound translation factors.

Functionally, forms part of the ribosomal stalk which helps the ribosome interact with GTP-bound translation factors. Is thus essential for accurate translation. This Cyanothece sp. (strain PCC 7425 / ATCC 29141) protein is Large ribosomal subunit protein bL12.